The sequence spans 491 residues: Aspartyl/glutamyl-tRNA(Asn/Gln) amidotransferase subunit B (491 aa).

It belongs to the GatB/GatE family. GatB subfamily. Heterotrimer of A, B and C subunits.

The enzyme catalyses L-glutamyl-tRNA(Gln) + L-glutamine + ATP + H2O = L-glutaminyl-tRNA(Gln) + L-glutamate + ADP + phosphate + H(+). It carries out the reaction L-aspartyl-tRNA(Asn) + L-glutamine + ATP + H2O = L-asparaginyl-tRNA(Asn) + L-glutamate + ADP + phosphate + 2 H(+). In terms of biological role, allows the formation of correctly charged Asn-tRNA(Asn) or Gln-tRNA(Gln) through the transamidation of misacylated Asp-tRNA(Asn) or Glu-tRNA(Gln) in organisms which lack either or both of asparaginyl-tRNA or glutaminyl-tRNA synthetases. The reaction takes place in the presence of glutamine and ATP through an activated phospho-Asp-tRNA(Asn) or phospho-Glu-tRNA(Gln). The chain is Aspartyl/glutamyl-tRNA(Asn/Gln) amidotransferase subunit B from Burkholderia cenocepacia (strain ATCC BAA-245 / DSM 16553 / LMG 16656 / NCTC 13227 / J2315 / CF5610) (Burkholderia cepacia (strain J2315)).